Consider the following 121-residue polypeptide: Large-conductance mechanosensitive channel (121 aa).

A run of 2 helical transmembrane segments spans residues 14 to 34 and 67 to 87; these read VLDLAVGVIIGAAFTALVKSL and GAFLNDVINFVITAFVIFVLI.

The protein belongs to the MscL family. In terms of assembly, homopentamer.

The protein resides in the cell membrane. In terms of biological role, channel that opens in response to stretch forces in the membrane lipid bilayer. May participate in the regulation of osmotic pressure changes within the cell. In Lactococcus lactis subsp. cremoris (strain SK11), this protein is Large-conductance mechanosensitive channel.